A 532-amino-acid chain; its full sequence is 2,3-bisphosphoglycerate-independent phosphoglycerate mutase (532 aa).

Positions 15 and 65 each coordinate Mn(2+). S65 functions as the Phosphoserine intermediate in the catalytic mechanism. Substrate contacts are provided by residues H126, 156-157 (RD), R188, R194, 258-261 (RPDR), and K331. The Mn(2+) site is built by D398, H402, D439, H440, and H457.

Belongs to the BPG-independent phosphoglycerate mutase family. Monomer. It depends on Mn(2+) as a cofactor.

The catalysed reaction is (2R)-2-phosphoglycerate = (2R)-3-phosphoglycerate. The protein operates within carbohydrate degradation; glycolysis; pyruvate from D-glyceraldehyde 3-phosphate: step 3/5. In terms of biological role, catalyzes the interconversion of 2-phosphoglycerate and 3-phosphoglycerate. This chain is 2,3-bisphosphoglycerate-independent phosphoglycerate mutase, found in Cyanothece sp. (strain PCC 7425 / ATCC 29141).